Reading from the N-terminus, the 297-residue chain is SH2 domain-containing protein 6 (297 aa).

Disordered regions lie at residues 1 to 61 (MSCP…FPTR) and 74 to 93 (MNPQ…RGTS). Residues 36-45 (PSKPPLPPPQ) are compositionally biased toward pro residues. The 109-residue stretch at 187–295 (WYSGNCDRQS…RGLTYLRFPT (109 aa)) folds into the SH2 domain.

The polypeptide is SH2 domain-containing protein 6 (Sh2d6) (Mus musculus (Mouse)).